A 240-amino-acid chain; its full sequence is Ribosomal RNA small subunit methyltransferase G (240 aa).

S-adenosyl-L-methionine contacts are provided by residues Gly79, Phe84, 130-131 (AE), and Arg149.

It belongs to the methyltransferase superfamily. RNA methyltransferase RsmG family.

Its subcellular location is the cytoplasm. Specifically methylates the N7 position of a guanine in 16S rRNA. In Desulforamulus reducens (strain ATCC BAA-1160 / DSM 100696 / MI-1) (Desulfotomaculum reducens), this protein is Ribosomal RNA small subunit methyltransferase G.